Here is a 226-residue protein sequence, read N- to C-terminus: Large ribosomal subunit protein uL1 (226 aa).

The protein belongs to the universal ribosomal protein uL1 family. In terms of assembly, part of the 50S ribosomal subunit.

Binds directly to 23S rRNA. The L1 stalk is quite mobile in the ribosome, and is involved in E site tRNA release. In terms of biological role, protein L1 is also a translational repressor protein, it controls the translation of the L11 operon by binding to its mRNA. This Treponema denticola (strain ATCC 35405 / DSM 14222 / CIP 103919 / JCM 8153 / KCTC 15104) protein is Large ribosomal subunit protein uL1.